Consider the following 596-residue polypeptide: Nitrite reductase (596 aa).

A signal peptide spans 1–29 (MRQRTPFARPGLLASAALALVLGPLAVAA). The segment at 30 to 76 (QEQAAPPKDPAAALEDHKTKTDNRYEPSLDNLAQQDVAALGAPEGIP) is N-terminal tail. His46 lines the heme c pocket. Residues Tyr54 and Ser57 each coordinate heme d1. The Cytochrome c domain occupies 77–162 (ALSDAQYNEA…ANYLLLDPAA (86 aa)). Heme c contacts are provided by Cys94, Cys97, His98, Lys108, and Tyr122. Residues Trp138, Arg203, His229, Arg232, Arg245, Arg272, Tyr292, Arg420, Gln536, and Thr583 each coordinate heme d1. Positions 163–596 (PPEFGMKEMR…NVYNTMTDTY (434 aa)) are D1-heme domain.

As to quaternary structure, homodimer. It depends on heme c as a cofactor. Requires heme as cofactor.

It is found in the periplasm. The enzyme catalyses nitric oxide + Fe(III)-[cytochrome c] + H2O = Fe(II)-[cytochrome c] + nitrite + 2 H(+). It carries out the reaction A + NH4(+) + H2O = hydroxylamine + AH2 + H(+). Inactivation of this cytochrome oxidase results in the loss of nitrite and nitric oxide reductase activities, but not of nitrous oxide reductase activity. In Paracoccus denitrificans (strain Pd 1222), this protein is Nitrite reductase (nirS).